The chain runs to 28 residues: Morintide mO6 (28 aa).

One can recognise a Chitin-binding type-1 domain in the interval 1-28 (NGLCCSQYGFCGTTSAYCSRANGCQSNC). 2 disulfide bridges follow: C4–C18 and C24–C28.

In terms of tissue distribution, seeds (at protein level).

Chitin-binding protein which functions in defense against chitin-containing fungal pathogens. The polypeptide is Morintide mO6 (Moringa oleifera (Horseradish tree)).